The following is a 1219-amino-acid chain: MPFYRRTVVPQRLCPRNPPQPLAELRDVSHLAALSLLRQLADLCGHSLALLEDLEGHLLALGRRTDSLYRRTVRLRRRLPCRLLGPEDDEELLAAANSGRENATATAHSRSSWRQPVNVFLSSGRPPSVEELLREAQLNLQSLLQEEYEEQYSEARLLGQTFRSSDGAPEPTPSPRPQSAKRLEFVLMPAKRQLSEDETTTQGVRAPEACLSLSTANKQSAWNDPFPLPILKERLWLQPCSTQSDLVPINISGQQFDRHASFRHSLFNTETAVNPKSTLRRRRTIIGFSNFSQRDQGHSSSPTGSLARSATSDIRPGHSAPQVVQGRVAVGQEARFPSLTSPGLRHSSSEPGDAHQARSASDHPGMESMAVVYSVPSSCNGPTESTFSTSWKGDAFTYMTPSASSQGNQVSENGKNPSSGNSWVPLNTLPPLVPKEAATLFVTRDNPAGCTGLPSYSEHPTLRRQIPERPPKIGLLARGTSRLETGPGGTNRFRERSLSVPTDSGVTSVDYDEEQKTSETRILPYASTSSEGSNSTDNIAALSTEQEARHRRQRSKSISLKKAKKKPSPPMRSVSLVKDEPALPPEGELVLPKDQRPRSLCLSLEHQGHHPPHPDAQGHPAVPMLKDPGSTQFSHHWYLTDWKSGDTYQSLSSSSTATGTTVIECTQVQGSSESLASPSTSRATTPSQLSIEVEAREVASPGRPTGLMSPSSGYSSQSETPTPTVSMSLTLGHLPPPSASVRVRPVVPERKSSLPPTSPMEKICKSRLSFDLPLTSSTTLDLSGMSISIRSKTKVSRHHSDTNFGVKLAQKTSPNQPIMPMVTQSDLRSVRLRSVSKSEPEDDIESPDYIEEPGAEEVFTMPERKVKPPIAEKPPLARRPPSLVHRPPSLPGEYPLTSPTMAMASRSSIPHMKQLPQDSYTVLRKPKSPSFPGESTASSSLVLSPLASSSGAFFSGTQQPPQASVEDGGPKVRALPERIGLQSQEEAEKKMTKIPPPVPKKPSVLYLPLTSPVAQMDACMAEPRLPFSPIITLEEDGKCPSTGDDQKSPGKGVTSPLHTDTEKEAISPGRSVEPSAEEKSLISDKTAEWIAEEEDDVFVASRTTEDLFTVIHRSKRKLLGWKETGEGFTGSKPSSHSPVKNTADSPTGEAAAAPGPSSSACLDAGRNDDFKALLQKKGSKATPRTRPSAAELLKTTNPLARRIIAQFSKDYEPTDNPST.

Disordered regions lie at residues 162 to 181 (FRSS…QSAK), 288 to 321 (FSNF…HSAP), 336 to 364 (FPSL…SDHP), 400 to 423 (TPSA…GNSW), 474 to 591 (GLLA…ELVL), 669 to 741 (QGSS…SASV), 854 to 938 (GAEE…STAS), 979 to 1003 (IGLQ…KKPS), 1033 to 1087 (LEED…DKTA), and 1121 to 1197 (WKET…KTTN). Over residues 288 to 312 (FSNFSQRDQGHSSSPTGSLARSATS) the composition is skewed to polar residues. A compositionally biased stretch (basic and acidic residues) spans 352–364 (GDAHQARSASDHP). Residue serine 499 is modified to Phosphoserine. The span at 526 to 545 (ASTSSEGSNSTDNIAALSTE) shows a compositional bias: polar residues. Residues 549–567 (RHRRQRSKSISLKKAKKKP) show a composition bias toward basic residues. Serine 575 is modified (phosphoserine). Residues 674-687 (SLASPSTSRATTPS) show a composition bias toward low complexity. Position 690 is a phosphoserine (serine 690). Composition is skewed to polar residues over residues 708–729 (MSPS…SMSL) and 897–908 (TSPTMAMASRSS). Serine 1048 carries the phosphoserine modification. Residues 1076–1087 (AEEKSLISDKTA) are compositionally biased toward basic and acidic residues. A compositionally biased stretch (polar residues) spans 1131 to 1144 (SKPSSHSPVKNTAD). Low complexity predominate over residues 1145–1160 (SPTGEAAAAPGPSSSA). Residue serine 1208 is modified to Phosphoserine.

Belongs to the NHS family.

This chain is NHS-like protein 2, found in Mus musculus (Mouse).